The primary structure comprises 93 residues: uncharacterized protein (93 aa).

This is an uncharacterized protein from Pasteurella multocida (strain Pm70).